Reading from the N-terminus, the 150-residue chain is MQFEERLQQLVESDWSLDQSSPNVLVIVLGDTARKYVELGGLKEHVTTNTVAGHVASRERVSVVFLGRVKYLYMYLTRMQAQANGPQYSNVLVYGLWDLTATQDGPQQLRLLSLVLRQCLSLPSKVEFYPEPPSSSVPARLLRFWDHIIR.

As to quaternary structure, component of the SHU complex composed of at least CSM2, PSY3, SHU1 and SHU2.

It localises to the nucleus. Its function is as follows. Plays a role in a RAD51/RAD54-dependent homologous recombination repair (HRR) pathway to repair MMS-induced lesions during S-phase. This is Suppressor of HU sensitivity involved in recombination protein 1 (SHU1) from Saccharomyces cerevisiae (strain ATCC 204508 / S288c) (Baker's yeast).